We begin with the raw amino-acid sequence, 440 residues long: 6-phospho-alpha-glucosidase (440 aa).

4–70 (FSVVIAGGGS…PEIEFSYTTD (67 aa)) provides a ligand contact to NAD(+). Residues arginine 93 and asparagine 147 each contribute to the substrate site. Cysteine 169 contributes to the Mn(2+) binding site. The active-site Proton donor is aspartate 170. Histidine 200 serves as a coordination point for Mn(2+). The Proton acceptor role is filled by tyrosine 263. Position 283 (arginine 283) interacts with substrate.

As to quaternary structure, homodimer. NAD(+) serves as cofactor. The cofactor is Mn(2+). Requires Co(2+) as cofactor. It depends on Ni(2+) as a cofactor.

It catalyses the reaction alpha-maltose 6'-phosphate + H2O = D-glucose 6-phosphate + D-glucose. Its pathway is glycan biosynthesis; sucrose metabolism. In terms of biological role, is involved in the catabolism of alpha-glycosides accumulated via a phosphoenolpyruvate-dependent phosphotransferase system (PEP-PTS). Hydrolyzes a wide variety of 6-phospho-alpha-D-glucosides including maltose-6'-phosphate, isomaltose-6'-phosphate, maltitol-6-phosphate, trehalose-6-phosphate and the 6'-phosphorylated derivatives of the five linkage-isomeric alpha-D-glucosyl-D-fructoses: trehalulose-6'-phosphate, turanose-6'-phosphate, maltulose-6'-phosphate, leucrose-6'-phosphate, and palatinose-6'-phosphate. However, sucrose-6-phosphate is not a substrate for this enzyme. The polypeptide is 6-phospho-alpha-glucosidase (Klebsiella pneumoniae).